Here is a 69-residue protein sequence, read N- to C-terminus: Ferredoxin-1 (69 aa).

C12, C18, and C57 together coordinate [3Fe-4S] cluster.

It depends on [3Fe-4S] cluster as a cofactor.

Functionally, electron transport protein for the cytochrome P-450-SU1 system. The protein is Ferredoxin-1 (suaB) of Streptomyces griseolus.